Here is a 140-residue protein sequence, read N- to C-terminus: Large ribosomal subunit protein uL13 (140 aa).

Belongs to the universal ribosomal protein uL13 family. In terms of assembly, part of the 50S ribosomal subunit.

Functionally, this protein is one of the early assembly proteins of the 50S ribosomal subunit, although it is not seen to bind rRNA by itself. It is important during the early stages of 50S assembly. This Methanosarcina barkeri (strain Fusaro / DSM 804) protein is Large ribosomal subunit protein uL13.